The chain runs to 953 residues: ATP-dependent 6-phosphofructokinase (953 aa).

The interval 1–558 is N-terminal catalytic PFK domain 1; it reads MIEGISFASF…QLQGFLLTNS (558 aa). Residues Gly193, 256–257, and 286–289 each bind ATP; these read RC and GDGS. Residue Asp287 coordinates Mg(2+). Substrate-binding positions include 332-334, Arg369, 376-378, Glu433, Arg460, and 466-469; these read SID, MGR, and HVQR. Residue Asp334 is the Proton acceptor of the active site. The tract at residues 559–572 is interdomain linker; sequence ADKDRPQEPAKDPL. The tract at residues 573–953 is C-terminal regulatory PFK domain 2; the sequence is RVAIVCTGAP…AKEQGIIDPC (381 aa). Residues Arg645, 702-706, Arg740, 747-749, Glu807, Arg833, 839-842, and Arg906 contribute to the beta-D-fructose 2,6-bisphosphate site; these read TISNN, QGG, and HVQQ.

The protein belongs to the phosphofructokinase type A (PFKA) family. ATP-dependent PFK group I subfamily. Eukaryotic two domain clade 'E' sub-subfamily. In terms of assembly, heterooctamer of 4 alpha and 4 beta chains. Mg(2+) is required as a cofactor.

It localises to the cytoplasm. It carries out the reaction beta-D-fructose 6-phosphate + ATP = beta-D-fructose 1,6-bisphosphate + ADP + H(+). It participates in carbohydrate degradation; glycolysis; D-glyceraldehyde 3-phosphate and glycerone phosphate from D-glucose: step 3/4. With respect to regulation, allosterically activated by ADP, AMP, or fructose 2,6-bisphosphate, and allosterically inhibited by ATP or citrate. Its function is as follows. Catalyzes the phosphorylation of D-fructose 6-phosphate to fructose 1,6-bisphosphate by ATP, the first committing step of glycolysis. The sequence is that of ATP-dependent 6-phosphofructokinase (PFK1) from Yarrowia lipolytica (strain CLIB 122 / E 150) (Yeast).